The sequence spans 497 residues: Actin-binding protein WASF2 (497 aa).

Disordered stretches follow at residues Lys-173–Trp-203 and Glu-239–Arg-436. The segment covering Ser-252–Ser-263 has biased composition (low complexity). Pro residues-rich tracts occupy residues Ser-298 to Pro-335 and Gly-343 to Pro-403. The region spanning Ala-435–Val-452 is the WH2 domain. Ser-473 bears the Phosphoserine mark.

This sequence belongs to the SCAR/WAVE family. Binds actin and the Arp2/3 complex. Interacts with BAIAP2. Component of the WAVE2 complex composed of ABI1, CYFIP1/SRA1, NCKAP1/NAP1 (NCKAP1l/HEM1 in hematopoietic cells) and WASF2/WAVE2. Directly interacts with BRK1. Interacts with human cytomegalovirus protein UL135. Interacts with FNBP1L (via the SH3 domain).

The protein resides in the cytoplasm. It localises to the cytoskeleton. Its subcellular location is the cell projection. The protein localises to the lamellipodium. It is found in the basolateral cell membrane. In terms of biological role, downstream effector molecule involved in the transmission of signals from tyrosine kinase receptors and small GTPases to the actin cytoskeleton. Promotes formation of actin filaments. Part of the WAVE complex that regulates lamellipodia formation. The WAVE complex regulates actin filament reorganization via its interaction with the Arp2/3 complex. The polypeptide is Actin-binding protein WASF2 (Mus musculus (Mouse)).